Here is a 121-residue protein sequence, read N- to C-terminus: uncharacterized protein (121 aa).

Disordered stretches follow at residues 1-28 (MGCA…QNGD) and 60-81 (QENL…EIPG). Residues S95 and S115 each carry the phosphoserine modification.

This is an uncharacterized protein from Mus musculus (Mouse).